We begin with the raw amino-acid sequence, 127 residues long: Protein pkiA (127 aa).

One can recognise an HIT domain in the interval 16–127; that stretch reads IFAKIISGAI…GGRQMNWPPG (112 aa).

The protein is Protein pkiA (pkiA) of Dictyostelium discoideum (Social amoeba).